The primary structure comprises 251 residues: MIRVNSLQVDSRLLPLSLQANAGEVWHVIGPNGCGKSTLLAALAGMIPFSGSVQVDGLDVSQASLSELARHRAYLAQNNKPSFQLHVFQYLALSVPANVALECSEVASEIDQISRLLNIDDKLHRSIHQLSGGEWQRVRLAGSCLQVSPVLNPSARLLIWDEPAAPLDIAQESLLYRLIERMAGQGLTVIMANHDLNRTLRHADQVLLLSRGVLYRAGSAKEVLTQEVLQSVFGTSIRRVELEGHPHLLFD.

The ABC transporter domain maps to 2–236 (IRVNSLQVDS…EVLQSVFGTS (235 aa)). 30–37 (GPNGCGKS) contributes to the ATP binding site.

Belongs to the ABC transporter superfamily. Vitamin B12 importer (TC 3.A.1.13.1) family. In terms of assembly, the complex is composed of two ATP-binding proteins (BtuD), two transmembrane proteins (BtuC) and a solute-binding protein (BtuF).

It is found in the cell inner membrane. It carries out the reaction an R-cob(III)alamin(out) + ATP + H2O = an R-cob(III)alamin(in) + ADP + phosphate + H(+). Part of the ABC transporter complex BtuCDF involved in vitamin B12 import. Responsible for energy coupling to the transport system. This is Vitamin B12 import ATP-binding protein BtuD from Vibrio cholerae serotype O1 (strain ATCC 39315 / El Tor Inaba N16961).